Here is a 316-residue protein sequence, read N- to C-terminus: Vacuolar membrane protein YNL058C (316 aa).

Positions 32–60 (KPTSSVVSETSSKSLPSLTSSAFSTSSGA) are disordered. A helical membrane pass occupies residues 93–113 (VYIAVGAVIGAIFISILIWWL). Ser-148, Ser-256, and Ser-276 each carry phosphoserine. Residues 240–304 (EEEERKLNLN…KAHKRQAPSM (65 aa)) are disordered. Residues 256–271 (SPERKEKKINSMEGYH) are compositionally biased toward basic and acidic residues.

It belongs to the PRM5 family.

It localises to the vacuole membrane. In Saccharomyces cerevisiae (strain ATCC 204508 / S288c) (Baker's yeast), this protein is Vacuolar membrane protein YNL058C.